The primary structure comprises 434 residues: Methylenetetrahydrofolate--tRNA-(uracil-5-)-methyltransferase TrmFO (434 aa).

9 to 14 (GAGLAG) is a binding site for FAD.

This sequence belongs to the MnmG family. TrmFO subfamily. It depends on FAD as a cofactor.

The protein resides in the cytoplasm. It carries out the reaction uridine(54) in tRNA + (6R)-5,10-methylene-5,6,7,8-tetrahydrofolate + NADH + H(+) = 5-methyluridine(54) in tRNA + (6S)-5,6,7,8-tetrahydrofolate + NAD(+). The enzyme catalyses uridine(54) in tRNA + (6R)-5,10-methylene-5,6,7,8-tetrahydrofolate + NADPH + H(+) = 5-methyluridine(54) in tRNA + (6S)-5,6,7,8-tetrahydrofolate + NADP(+). Its function is as follows. Catalyzes the folate-dependent formation of 5-methyl-uridine at position 54 (M-5-U54) in all tRNAs. The polypeptide is Methylenetetrahydrofolate--tRNA-(uracil-5-)-methyltransferase TrmFO (Bacillus licheniformis (strain ATCC 14580 / DSM 13 / JCM 2505 / CCUG 7422 / NBRC 12200 / NCIMB 9375 / NCTC 10341 / NRRL NRS-1264 / Gibson 46)).